We begin with the raw amino-acid sequence, 230 residues long: tRNA (cytidine-2'-O-)-methyltransferase TrmJ (230 aa).

S-adenosyl-L-methionine contacts are provided by residues 79-81 (TSG), Gly115, Ile135, and 142-144 (PIM).

Belongs to the class IV-like SAM-binding methyltransferase superfamily. RNA methyltransferase TrmH family. As to quaternary structure, homodimer.

Its subcellular location is the cytoplasm. It catalyses the reaction cytidine(32) in tRNA + S-adenosyl-L-methionine = 2'-O-methylcytidine(32) in tRNA + S-adenosyl-L-homocysteine + H(+). Catalyzes the formation of 2'O-methylated cytidine (Cm32) at position 32 in tRNA. The protein is tRNA (cytidine-2'-O-)-methyltransferase TrmJ of Methanocaldococcus jannaschii (strain ATCC 43067 / DSM 2661 / JAL-1 / JCM 10045 / NBRC 100440) (Methanococcus jannaschii).